Here is a 595-residue protein sequence, read N- to C-terminus: NAD-dependent protein deacetylase hst4 (595 aa).

Positions 1–106 are disordered; it reads MAPRKTKPAT…HLDLTPRLGF (106 aa). Positions 9–32 are enriched in low complexity; sequence ATKPAAKPTPASTATTSSCPSPKS. The Deacetylase sirtuin-type domain occupies 109-428; that stretch reads YGDQEPQLNL…SADVERVKNE (320 aa). Residues 134 to 153 and 222 to 225 contribute to the NAD(+) site; these read GAGISTSAGIPDFRSDDGLF and QNID. H253 functions as the Proton acceptor in the catalytic mechanism. Positions 261, 264, 283, and 286 each coordinate Zn(2+). Residues 342–344, 373–375, and C394 contribute to the NAD(+) site; these read GTS and NNE. Polar residues predominate over residues 445-473; it reads QAQTGMLTPSSSYDGDVENASTTTLSNPA. Residues 445–595 form a disordered region; that stretch reads QAQTGMLTPS…IPKGMGKLLD (151 aa). Basic and acidic residues-rich tracts occupy residues 478-492 and 530-543; these read KLTEILKASKKDAPK and TPEEKSVKLEEHKA.

Belongs to the sirtuin family. Class I subfamily. Requires Zn(2+) as cofactor.

It is found in the nucleus. The enzyme catalyses N(6)-acetyl-L-lysyl-[protein] + NAD(+) + H2O = 2''-O-acetyl-ADP-D-ribose + nicotinamide + L-lysyl-[protein]. Its function is as follows. NAD-dependent histone deacetylase, which could function in telomeric silencing, cell cycle progression and chromosome stability. The polypeptide is NAD-dependent protein deacetylase hst4 (Emericella nidulans (strain FGSC A4 / ATCC 38163 / CBS 112.46 / NRRL 194 / M139) (Aspergillus nidulans)).